Reading from the N-terminus, the 57-residue chain is Large ribosomal subunit protein bL32c (57 aa).

It belongs to the bacterial ribosomal protein bL32 family.

Its subcellular location is the plastid. The protein resides in the chloroplast. This is Large ribosomal subunit protein bL32c from Nandina domestica (Heavenly bamboo).